The following is a 629-amino-acid chain: Serine/threonine-protein kinase ICK (629 aa).

One can recognise a Protein kinase domain in the interval 4–284 (YTTIKQLGDG…ASQALRYPYF (281 aa)). ATP-binding positions include 10–18 (LGDGTYGSV) and lysine 33. Aspartate 125 acts as the Proton acceptor in catalysis. At threonine 157 the chain carries Phosphothreonine; by CDK7. The residue at position 159 (tyrosine 159) is a Phosphotyrosine. Phosphoserine is present on serine 161. Disordered stretches follow at residues 292–376 (IISK…SLHN), 455–483 (SESVGTGTTVSTQASSQRRDTPTLQSSAK), and 581–629 (SSLK…PSRR). Basic and acidic residues predominate over residues 296–306 (DSGKPQREVQD). The segment covering 309–321 (GPPPYIKPAPPAQ) has biased composition (pro residues). Composition is skewed to low complexity over residues 322-344 (APAKAYTLISSRPSQASQPPQHS) and 457-470 (SVGTGTTVSTQASS).

This sequence belongs to the protein kinase superfamily. CMGC Ser/Thr protein kinase family. CDC2/CDKX subfamily. Mg(2+) is required as a cofactor. In terms of processing, autophosphorylated on serine and threonine residues. Phosphorylation at Thr-157 by CDK7/Cak1p increases kinase activity. As to expression, highly expressed in colon and lung, lower levels present in heart, esophagus, stomach, small intestine and ovary. Localizes to the crypt region of large and small intestine.

It is found in the cytoplasm. The protein localises to the cytosol. The protein resides in the cell projection. Its subcellular location is the cilium. It localises to the nucleus. It is found in the cytoskeleton. The protein localises to the cilium basal body. The catalysed reaction is L-seryl-[protein] + ATP = O-phospho-L-seryl-[protein] + ADP + H(+). It carries out the reaction L-threonyl-[protein] + ATP = O-phospho-L-threonyl-[protein] + ADP + H(+). In terms of biological role, has an essential role in ciliogenesis, particularly in neuronal and retinal progenitor cells. Phosphorylates KIF3A. Involved in the control of ciliary length. Regulates the ciliary localization of SHH pathway components as well as the localization of IFT components at ciliary tips. May play a role in cardiac development. Regulates intraflagellar transport (IFT) speed and negatively regulates cilium length in a cAMP and mTORC1 signaling -dependent manner and this regulation requires its kinase activity. The polypeptide is Serine/threonine-protein kinase ICK (Cilk1) (Mus musculus (Mouse)).